A 361-amino-acid chain; its full sequence is Free fatty acid receptor 4 (361 aa).

The segment at 1–21 (MSPECAQTTGPGPSRTPDQVN) is disordered. At 1–45 (MSPECAQTTGPGPSRTPDQVNRTHFPFFSDVKGDHRLVLSVLETT) the chain is on the extracellular side. N21 carries an N-linked (GlcNAc...) asparagine glycan. Residues 46–66 (VLGLIFVVSLLGNVCALVLVV) traverse the membrane as a helical segment. Residues 67–77 (RRRRRGATVSL) are Cytoplasmic-facing. A helical transmembrane segment spans residues 78 to 98 (VLNLFCADLLFTSAIPLVLVV). Over 99-103 (RWTEA) the chain is Extracellular. Residues 104–124 (WLLGPVVCHLLFYVMTMSGSV) traverse the membrane as a helical segment. An intrachain disulfide couples C111 to C194. At 125-156 (TILTLAAVSLERMVCIVRLRRGLSGPGRRTQA) the chain is on the cytoplasmic side. A helical transmembrane segment spans residues 157-177 (ALLAFIWGYSALAALPLCILF). Residues 178–204 (RVVPQRLPGGDQEIPICTLDWPNRIGE) lie on the Extracellular side of the membrane. A helical membrane pass occupies residues 205–225 (ISWDVFFVTLNFLVPGLVIVI). At 226–268 (SYSKILQITKASRKRLTLSLAYSESHQIRVSQQDYRLFRTLFL) the chain is on the cytoplasmic side. Residues 269-289 (LMVSFFIMWSPIIITILLILI) form a helical membrane-spanning segment. The Extracellular portion of the chain corresponds to 290–295 (QNFRQD). A helical membrane pass occupies residues 296–316 (LVIWPSLFFWVVAFTFANSAL). Residues 317–361 (NPILYNMSLFRSEWRKIFCCFFFPEKGAIFTETSIRRNDLSVIST) lie on the Cytoplasmic side of the membrane. T347 and T349 each carry phosphothreonine. Residues S350, S357, and S360 each carry the phosphoserine modification.

It belongs to the G-protein coupled receptor 1 family. Interacts (via C-terminus) with ARRB2 following LCFAs stimulation. In terms of processing, phosphorylated at two clusters of Ser and Thr residues located in the intracellular C-terminus. Prerequisite for FFAR4 internalization via an ARRB2-dependent pathway.

The protein resides in the cell membrane. It is found in the endosome membrane. It localises to the lysosome membrane. Its subcellular location is the cell projection. The protein localises to the cilium membrane. G-protein-coupled receptor for long-chain fatty acids (LCFAs) with a major role in adipogenesis, energy metabolism and inflammation. Signals via G-protein and beta-arrestin pathways. LCFAs sensing initiates activation of phosphoinositidase C-linked G proteins GNAQ and GNA11 (G(q)/G(11)), inducing a variety of cellular responses via second messenger pathways such as intracellular calcium mobilization, modulation of cyclic adenosine monophosphate (cAMP) production, and mitogen-activated protein kinases (MAPKs). After LCFAs binding, associates with beta-arrestin ARRB2 that acts as an adapter protein coupling the receptor to specific downstream signaling pathways, as well as mediating receptor endocytosis. In response to dietary fats, plays an important role in the regulation of adipocyte proliferation and differentiation. Acts as a receptor for omega-3 polyunsaturated fatty acids (PUFAs) at primary cilium of perivascular preadipocytes, initiating an adipogenic program via cAMP and CTCF-dependent chromatin remodeling that ultimately results in transcriptional activation of adipogenic genes and cell cycle entry. Induces differentiation of brown and beige adipocytes probably via autocrine and endocrine functions of FGF21 hormone. Contributes to the thermogenic activation of brown adipose tissue and the browning of white adipose tissue. Activates brown adipocytes by initiating intracellular calcium signaling leading to mitochondrial depolarization and fission, and overall increased mitochondrial respiration. Consequently stimulates fatty acid uptake and oxidation in mitochondria together with UCP1-mediated thermogenic respiration, eventually reducing fat mass. Regulates bi-potential differentiation of bone marrow mesenchymal stem cells toward osteoblasts or adipocytes likely by up-regulating distinct integrins. In response to dietary fats regulates hormone secretion and appetite. Stimulates GIP and GLP1 secretion from enteroendocrine cells as well as GCG secretion in pancreatic alpha cells, thereby playing a role in the regulation of blood glucose levels. Negatively regulates glucose-induced SST secretion in pancreatic delta cells. Mediates LCFAs inhibition of GHRL secretion, an appetite-controlling hormone. In taste buds, contributes to sensing of dietary fatty acids by the gustatory system. During the inflammatory response, promotes anti-inflammatory M2 macrophage differentiation in adipose tissue. Mediates the anti-inflammatory effects of omega-3 PUFAs via inhibition of NLRP3 inflammasome activation. In this pathway, interacts with adapter protein ARRB2 and inhibits the priming step triggered by Toll-like receptors (TLRs) at the level of TAK1 and TAB1. Further inhibits the activation step when ARRB2 directly associates with NLRP3, leading to inhibition of pro-inflammatory cytokine release. Mediates LCFAs anti-apoptotic effects. This is Free fatty acid receptor 4 (Ffar4) from Rattus norvegicus (Rat).